The chain runs to 361 residues: Mitogen-activated protein kinase 1 (361 aa).

The region spanning Tyr28 to Leu316 is the Protein kinase domain. ATP is bound by residues Ile34–Val42 and Lys57. Asp152 (proton acceptor) is an active-site residue. Thr188 carries the phosphothreonine modification. Residues Thr188 to Tyr190 carry the TXY motif. Tyr190 carries the post-translational modification Phosphotyrosine.

The protein belongs to the protein kinase superfamily. CMGC Ser/Thr protein kinase family. MAP kinase subfamily. As to quaternary structure, interacts with CDK2AP2. Mg(2+) serves as cofactor. Post-translationally, dually phosphorylated on Thr-188 and Tyr-190, which activates the enzyme. As to expression, expressed in the central nervous system, kidney, liver, intestine and the hematopoietic system. Also found in heart, muscle, pancreas and lung.

The protein localises to the cytoplasm. The protein resides in the cytoskeleton. It localises to the microtubule organizing center. Its subcellular location is the centrosome. It is found in the spindle. The enzyme catalyses L-seryl-[protein] + ATP = O-phospho-L-seryl-[protein] + ADP + H(+). It catalyses the reaction L-threonyl-[protein] + ATP = O-phospho-L-threonyl-[protein] + ADP + H(+). With respect to regulation, activated by tyrosine phosphorylation during the M phase of the meiotic cell cycle. Dephosphorylated and inactivated by DUSP1. In terms of biological role, serine/threonine kinase which acts as an essential component of the MAP kinase signal transduction pathway. Plays an important role in the MAPK/ERK cascade. Depending on the cellular context, this cascade mediates diverse biological functions such as cell growth, adhesion, survival and differentiation through the regulation of transcription, translation, cytoskeletal rearrangements. The MAPK/ERK cascade also plays a role in initiation and regulation of meiosis, mitosis, and postmitotic functions in differentiated cells by phosphorylating a number of transcription factors. Many of the substrates are localized in the nucleus, and seem to participate in the regulation of transcription upon stimulation. However, other substrates are found in the cytosol as well as in other cellular organelles, and those are responsible for processes such as translation, mitosis and apoptosis. Moreover, the MAPK/ERK cascade is also involved in the regulation of the endosomal dynamics, including lysosome processing and endosome cycling through the perinuclear recycling compartment (PNRC); as well as in the fragmentation of the Golgi apparatus during mitosis. Phosphorylates microtubule-associated protein 2 (MAP2), myelin basic protein (MBP) and Elk-1. Phosphorylates dual specificity protein phosphatase 1 (DUSP1) during meiosis, increasing its stability. Activated by M phase promoting factor (MPF). Plays a role in the spindle assembly checkpoint. The sequence is that of Mitogen-activated protein kinase 1 (mapk1) from Xenopus laevis (African clawed frog).